Reading from the N-terminus, the 193-residue chain is Ion-translocating oxidoreductase complex subunit B (193 aa).

A hydrophobic region spans residues 1–26; it reads MSTMLIAVILLTLLALFFGVLLGFAA. The 4Fe-4S domain occupies 32–90; the sequence is EGNPIVDELEAILPQTQCGQCGYPGCRPYAEAIANGDKVNKCPPGGTATMEKLASLMGV. [4Fe-4S] cluster-binding residues include C49, C52, C57, C73, C114, C117, C120, C124, C144, C147, C150, and C154. 2 4Fe-4S ferredoxin-type domains span residues 105 to 134 and 136 to 164; these read KVAY…GAGK and MHTV…MIPV.

The protein belongs to the 4Fe4S bacterial-type ferredoxin family. RnfB subfamily. In terms of assembly, the complex is composed of six subunits: RnfA, RnfB, RnfC, RnfD, RnfE and RnfG. It depends on [4Fe-4S] cluster as a cofactor.

The protein resides in the cell inner membrane. Its function is as follows. Part of a membrane-bound complex that couples electron transfer with translocation of ions across the membrane. The chain is Ion-translocating oxidoreductase complex subunit B from Shewanella sp. (strain MR-7).